Reading from the N-terminus, the 601-residue chain is ATP-dependent RNA helicase DeaD (601 aa).

The Q motif motif lies at 6–34 (STFSFLGLNPFIIKSLSKMGYVKPSPIQA). One can recognise a Helicase ATP-binding domain in the interval 37 to 208 (IPLLLEGRDV…KRFMKNPQEI (172 aa)). Residue 50–57 (AQTGSGKT) participates in ATP binding. Positions 156–159 (DEAD) match the DEAD box motif. Residues 231-378 (KTDALIRFLE…EVQLPKIEVL (148 aa)) enclose the Helicase C-terminal domain. The span at 564-581 (SIFNKDKNNKRRFSDNRL) shows a compositional bias: basic and acidic residues. The segment at 564 to 601 (SIFNKDKNNKRRFSDNRLNKSSSIKNETKSSFFRRKSV) is disordered. Positions 582-594 (NKSSSIKNETKSS) are enriched in polar residues.

This sequence belongs to the DEAD box helicase family. DeaD/CsdA subfamily.

It localises to the cytoplasm. The enzyme catalyses ATP + H2O = ADP + phosphate + H(+). Functionally, DEAD-box RNA helicase involved in various cellular processes at low temperature, including ribosome biogenesis, mRNA degradation and translation initiation. The sequence is that of ATP-dependent RNA helicase DeaD from Buchnera aphidicola subsp. Schizaphis graminum (strain Sg).